We begin with the raw amino-acid sequence, 512 residues long: Glycerol kinase (512 aa).

T13 contacts ADP. T13, T14, and S15 together coordinate ATP. T13 is a sn-glycerol 3-phosphate binding site. Position 17 (R17) interacts with ADP. Sn-glycerol 3-phosphate contacts are provided by R83, E84, Y135, and D252. Glycerol is bound by residues R83, E84, Y135, D252, and Q253. Residues T274 and G318 each contribute to the ADP site. Residues T274, G318, Q322, and G419 each contribute to the ATP site. ADP contacts are provided by G419 and N423.

This sequence belongs to the FGGY kinase family.

The enzyme catalyses glycerol + ATP = sn-glycerol 3-phosphate + ADP + H(+). It functions in the pathway polyol metabolism; glycerol degradation via glycerol kinase pathway; sn-glycerol 3-phosphate from glycerol: step 1/1. Its activity is regulated as follows. Inhibited by fructose 1,6-bisphosphate (FBP). Functionally, key enzyme in the regulation of glycerol uptake and metabolism. Catalyzes the phosphorylation of glycerol to yield sn-glycerol 3-phosphate. This Corynebacterium kroppenstedtii (strain DSM 44385 / JCM 11950 / CIP 105744 / CCUG 35717) protein is Glycerol kinase.